Here is a 235-residue protein sequence, read N- to C-terminus: Phosphoribosylaminoimidazole-succinocarboxamide synthase (235 aa).

This sequence belongs to the SAICAR synthetase family.

The catalysed reaction is 5-amino-1-(5-phospho-D-ribosyl)imidazole-4-carboxylate + L-aspartate + ATP = (2S)-2-[5-amino-1-(5-phospho-beta-D-ribosyl)imidazole-4-carboxamido]succinate + ADP + phosphate + 2 H(+). It participates in purine metabolism; IMP biosynthesis via de novo pathway; 5-amino-1-(5-phospho-D-ribosyl)imidazole-4-carboxamide from 5-amino-1-(5-phospho-D-ribosyl)imidazole-4-carboxylate: step 1/2. This Streptococcus thermophilus (strain ATCC BAA-250 / LMG 18311) protein is Phosphoribosylaminoimidazole-succinocarboxamide synthase.